A 497-amino-acid chain; its full sequence is Probable malate:quinone oxidoreductase (497 aa).

Belongs to the MQO family. FAD is required as a cofactor.

The catalysed reaction is (S)-malate + a quinone = a quinol + oxaloacetate. It functions in the pathway carbohydrate metabolism; tricarboxylic acid cycle; oxaloacetate from (S)-malate (quinone route): step 1/1. The protein is Probable malate:quinone oxidoreductase of Prochlorococcus marinus (strain MIT 9515).